Consider the following 1164-residue polypeptide: Auxin response factor 7 (1164 aa).

A DNA-binding region (TF-B3) is located at residues 127–229 (FCKTLTASDT…QLLLGIRRAN (103 aa)). Disordered stretches follow at residues 451-505 (HNNL…QQQL), 536-555 (QQLQSQQHSNNNQSQSQQQQ), 570-728 (HQQP…LLQQ), 765-858 (FLSP…SSSG), and 903-930 (KSKASLTDHQLEASASGTSYGLDGGENN). The span at 464-489 (LSFQTPHGGISSSNLQFNKQNQQAPM) shows a compositional bias: polar residues. Low complexity predominate over residues 570 to 635 (HQQPLQQQTQ…SQQASTHHLQ (66 aa)). The segment covering 637 to 651 (QLVSGSMASSVITPP) has biased composition (polar residues). A compositionally biased stretch (low complexity) spans 652-671 (SSSLNQSFQQQQQQSKQLQQ). Over residues 678–710 (ASTSQSSVIETSKSSSNLMSAPPQETQFSRQVE) the composition is skewed to polar residues. 2 stretches are compositionally biased toward low complexity: residues 711–728 (QQQPPGLNGQNQQTLLQQ) and 765–790 (FLSPQSQLPHHQLQSQQLQQLPTLSQ). The segment covering 791–808 (GHQFPSSCTNNGLSTLQP) has biased composition (polar residues). The span at 841–851 (PSSSTSPSTNN) shows a compositional bias: low complexity. Residues 903 to 921 (KSKASLTDHQLEASASGTS) show a composition bias toward polar residues. In terms of domain architecture, PB1 spans 1037-1130 (RTYTKVQKRG…EVQQMSLDGN (94 aa)). The segment at 1145–1164 (DSGNAWRGHYDDNSATSFNR) is disordered.

The protein belongs to the ARF family. In terms of assembly, homodimers and heterodimers. Interacts with the auxin-responsive proteins IAA1 and IAA12 (BODENLOS). Interacts (via PB1 domain) with IAA17 (via PB1 domain). Interacts with IAA19. Interacts with ARF5. Binds to JMJ30. Binds to ATXR2 in the nucleus. In terms of tissue distribution, expressed in the whole plant.

The protein localises to the nucleus. Functionally, auxin response factors (ARFs) are transcriptional factors that bind specifically to the DNA sequence 5'-TGTCTC-3' found in the auxin-responsive promoter elements (AuxREs). Acts as a transcriptional activator of several tropic stimulus-induced (TSI) genes, including SAUR50. Formation of heterodimers with Aux/IAA proteins may alter their ability to modulate early auxin response genes expression. Required for differential growth responses of aerial tissues. Involved in ethylene responses. Regulates lateral root formation through direct regulation of LBD16 and/or LBD29. Functionally redundant with ARF19. Mediates embryo axis formation and vascular tissues differentiation. Functionally redundant with ARF5. Involved in cellular dedifferentiation during callus formation on callus-inducing medium (CIM) and in an ATXR2-dependent manner. The protein is Auxin response factor 7 of Arabidopsis thaliana (Mouse-ear cress).